The following is a 382-amino-acid chain: Pyrimidine monooxygenase RutA (382 aa).

Residues 68–69 (IK), Asn134, Glu143, 159–160 (RY), and Ser209 contribute to the FMN site.

It belongs to the NtaA/SnaA/DszA monooxygenase family. RutA subfamily.

The enzyme catalyses uracil + FMNH2 + NADH + O2 = (Z)-3-ureidoacrylate + FMN + NAD(+) + H2O + H(+). It catalyses the reaction thymine + FMNH2 + NADH + O2 = (Z)-2-methylureidoacrylate + FMN + NAD(+) + H2O + H(+). Catalyzes the pyrimidine ring opening between N-3 and C-4 by an unusual flavin hydroperoxide-catalyzed mechanism, adding oxygen atoms in the process to yield ureidoacrylate peracid, that immediately reacts with FMN forming ureidoacrylate and FMN-N(5)-oxide. The FMN-N(5)-oxide reacts spontaneously with NADH to produce FMN. Requires the flavin reductase RutF to regenerate FMN in vivo. The polypeptide is Pyrimidine monooxygenase RutA (Escherichia coli O150:H5 (strain SE15)).